Here is a 318-residue protein sequence, read N- to C-terminus: NADH-ubiquinone oxidoreductase chain 1 (318 aa).

The next 8 membrane-spanning stretches (helical) occupy residues 2 to 22 (FMINVLLLIIPILLAVAFLTL), 70 to 90 (MFIIAPILALTLALTMWIPLP), 100 to 120 (LGILFMLAMSSLAVYSILWSG), 147 to 167 (AIILLSVLLMSGSFTLSTLII), 171 to 191 (YLWLIFPSWPLAMMWFISTLA), 217 to 237 (AGPFALFFLAEYANIIMMNIF), 254 to 276 (LYSINFTMKTLLLTCSFLWIRAS), and 294 to 314 (LPLTLALCMWHVSLPIMLSSI).

It belongs to the complex I subunit 1 family. Core subunit of respiratory chain NADH dehydrogenase (Complex I) which is composed of 45 different subunits.

Its subcellular location is the mitochondrion inner membrane. The enzyme catalyses a ubiquinone + NADH + 5 H(+)(in) = a ubiquinol + NAD(+) + 4 H(+)(out). Functionally, core subunit of the mitochondrial membrane respiratory chain NADH dehydrogenase (Complex I) which catalyzes electron transfer from NADH through the respiratory chain, using ubiquinone as an electron acceptor. Essential for the catalytic activity and assembly of complex I. This is NADH-ubiquinone oxidoreductase chain 1 (MT-ND1) from Equus asinus (Donkey).